An 84-amino-acid chain; its full sequence is Cell division topological specificity factor (84 aa).

Belongs to the MinE family.

Its function is as follows. Prevents the cell division inhibition by proteins MinC and MinD at internal division sites while permitting inhibition at polar sites. This ensures cell division at the proper site by restricting the formation of a division septum at the midpoint of the long axis of the cell. The polypeptide is Cell division topological specificity factor (Chromohalobacter salexigens (strain ATCC BAA-138 / DSM 3043 / CIP 106854 / NCIMB 13768 / 1H11)).